A 476-amino-acid polypeptide reads, in one-letter code: Adenosylhomocysteinase (476 aa).

Positions 67, 142, and 202 each coordinate substrate. T203–T205 contacts NAD(+). The substrate site is built by K232 and D236. NAD(+)-binding positions include N237, G266–G271, E289, N324, I345–H347, and N390.

The protein belongs to the adenosylhomocysteinase family. Requires NAD(+) as cofactor.

Its subcellular location is the cytoplasm. The enzyme catalyses S-adenosyl-L-homocysteine + H2O = L-homocysteine + adenosine. Its pathway is amino-acid biosynthesis; L-homocysteine biosynthesis; L-homocysteine from S-adenosyl-L-homocysteine: step 1/1. In terms of biological role, may play a key role in the regulation of the intracellular concentration of adenosylhomocysteine. This chain is Adenosylhomocysteinase, found in Synechococcus sp. (strain WH7803).